We begin with the raw amino-acid sequence, 481 residues long: Cholesterol 16,22-dihydroxylase CYP90G4 (481 aa).

Residues 4-24 (SYLSFFVLSSILVLTLIFFFM) form a helical membrane-spanning segment. Cys-426 is a heme binding site.

It belongs to the cytochrome P450 family. In terms of tissue distribution, mainly expressed in leaves and seed pods and, at low levels, in flowers and stems.

It localises to the membrane. The protein operates within steroid metabolism; cholesterol metabolism. Its function is as follows. Involved in the biosynthesis of spiroketal steroid and saponin natural products from cholesterol such as diosgenin and analogs (e.g. furostanol and spirostanol), plant defense compounds used as main precursors for the industrial production of steroid hormones. During the 5,6-spiroketalization of cholesterol, catalyzes the hydroxylation of cholesterol to form 16S,22S-dihydroxycholesterol and, possibly, the subsequent conversion of 16S,22S-dihydroxycholesterol into 16-oxo-22-hydroxy-cholesterol and 16-hydroxy-22-oxo-cholesterol. 16-hydroxy-22-oxo-cholesterol submit a spontaneous reaction leading to the production of furostanol-type steroid diastereomers, precursors of diosgenin. The polypeptide is Cholesterol 16,22-dihydroxylase CYP90G4 (Trigonella foenum-graecum (Fenugreek)).